The following is a 259-amino-acid chain: Probable ABC transporter permease protein RT0041 (259 aa).

Transmembrane regions (helical) follow at residues 20–40, 49–69, 148–168, 195–215, and 237–257; these read VGIFALFSFIAISSIIKPPLY, LFIGFHSLPVVAMTTFFSGAV, VIAAIITMPCLVLIGDVIGVM, LIDVISGLVKATVFGFIISII, and AVVNSSILILISNYLITELLF.

The protein belongs to the MlaE permease family.

The protein localises to the cell inner membrane. In terms of biological role, could be part of an ABC transporter complex. This Rickettsia typhi (strain ATCC VR-144 / Wilmington) protein is Probable ABC transporter permease protein RT0041.